The chain runs to 358 residues: Protein-glutamate methylesterase/protein-glutamine glutaminase (358 aa).

A Response regulatory domain is found at 5-122 (SVLIIDDSAL…RNSLEAYTDE (118 aa)). D56 carries the post-translational modification 4-aspartylphosphate. A CheB-type methylesterase domain is found at 159 to 351 (GISTEKLIII…RRILARLVGA (193 aa)). Catalysis depends on residues S171, H197, and D293.

The protein belongs to the CheB family. In terms of processing, phosphorylated by CheA. Phosphorylation of the N-terminal regulatory domain activates the methylesterase activity.

Its subcellular location is the cytoplasm. The enzyme catalyses [protein]-L-glutamate 5-O-methyl ester + H2O = L-glutamyl-[protein] + methanol + H(+). It catalyses the reaction L-glutaminyl-[protein] + H2O = L-glutamyl-[protein] + NH4(+). In terms of biological role, involved in chemotaxis. Part of a chemotaxis signal transduction system that modulates chemotaxis in response to various stimuli. Catalyzes the demethylation of specific methylglutamate residues introduced into the chemoreceptors (methyl-accepting chemotaxis proteins or MCP) by CheR. Also mediates the irreversible deamidation of specific glutamine residues to glutamic acid. The sequence is that of Protein-glutamate methylesterase/protein-glutamine glutaminase from Nitrosomonas europaea (strain ATCC 19718 / CIP 103999 / KCTC 2705 / NBRC 14298).